The primary structure comprises 342 residues: Phosphate acyltransferase (342 aa).

This sequence belongs to the PlsX family. As to quaternary structure, homodimer. Probably interacts with PlsY.

The protein localises to the cytoplasm. It carries out the reaction a fatty acyl-[ACP] + phosphate = an acyl phosphate + holo-[ACP]. It participates in lipid metabolism; phospholipid metabolism. Its function is as follows. Catalyzes the reversible formation of acyl-phosphate (acyl-PO(4)) from acyl-[acyl-carrier-protein] (acyl-ACP). This enzyme utilizes acyl-ACP as fatty acyl donor, but not acyl-CoA. The protein is Phosphate acyltransferase of Shewanella pealeana (strain ATCC 700345 / ANG-SQ1).